The primary structure comprises 22 residues: Zinc finger protein 326 (22 aa).

The disordered stretch occupies residues 1-22 (QGYGFNEPEQTRNQGGSSWEAP). Positions 11–22 (TRNQGGSSWEAP) are enriched in polar residues.

It belongs to the AKAP95 family.

It is found in the nucleus matrix. Probable transcriptional activator which may play a role in neuronal differentiation. Able to bind DNA and activate expression in vitro. This is Zinc finger protein 326 (Znf326) from Rattus norvegicus (Rat).